Consider the following 450-residue polypeptide: Phosphoglucosamine mutase (450 aa).

The active-site Phosphoserine intermediate is the Ser-101. 4 residues coordinate Mg(2+): Ser-101, Asp-241, Asp-243, and Asp-245. Ser-101 bears the Phosphoserine mark.

The protein belongs to the phosphohexose mutase family. Mg(2+) serves as cofactor. Activated by phosphorylation.

It catalyses the reaction alpha-D-glucosamine 1-phosphate = D-glucosamine 6-phosphate. Catalyzes the conversion of glucosamine-6-phosphate to glucosamine-1-phosphate. The polypeptide is Phosphoglucosamine mutase (Ligilactobacillus salivarius (strain UCC118) (Lactobacillus salivarius)).